The following is a 479-amino-acid chain: Monodehydroascorbate reductase 1, peroxisomal (479 aa).

At 1-3 (MGR) the chain is on the cytoplasmic side. Residues 4-24 (AFEYVILGGGVAAGYAALEFV) form a helical membrane-spanning segment. FAD contacts are provided by residues 12–15 (GGVA), Glu-41, Arg-48, Lys-53, and 147–148 (RN). The Peroxisomal portion of the chain corresponds to 25–445 (RRNGGASSQE…QATGGGGKPT (421 aa)). Residues 172-178 (GGYIGME), Arg-202, and Gly-260 each bind NAD(+). NADP(+)-binding positions include 174–178 (YIGME), Arg-202, and Gly-260. An FAD-binding site is contributed by Asp-297. Residue 314 to 315 (EH) participates in NAD(+) binding. 314 to 315 (EH) provides a ligand contact to NADP(+). FAD is bound at residue Val-316. An L-ascorbate-binding site is contributed by Arg-320. Residue Tyr-347 participates in FAD binding. Tyr-347 is a binding site for NAD(+). Residue Tyr-347 participates in NADP(+) binding. Residue Arg-349 coordinates L-ascorbate. A helical membrane pass occupies residues 446-466 (CAWHATVGVAAAVSIAAFACW). Topologically, residues 467-479 (YGWQAPYVLKRDF) are cytoplasmic.

The protein belongs to the FAD-dependent oxidoreductase family. Requires FAD as cofactor.

The protein localises to the peroxisome membrane. It carries out the reaction 2 monodehydro-L-ascorbate radical + NADH + H(+) = 2 L-ascorbate + NAD(+). Catalyzes the conversion of monodehydroascorbate to ascorbate, oxidizing NADH in the process. Ascorbate is a major antioxidant against reactive oxygen species (ROS) and nitric oxide (NO). In Oryza sativa subsp. japonica (Rice), this protein is Monodehydroascorbate reductase 1, peroxisomal.